A 180-amino-acid chain; its full sequence is Large ribosomal subunit protein eL18 (180 aa).

The segment at 152-180 (FGPAPGVPGSHTKPYVISKSRERTNAHRA) is disordered. The span at 170–180 (KSRERTNAHRA) shows a compositional bias: basic and acidic residues.

The protein belongs to the eukaryotic ribosomal protein eL18 family.

The protein localises to the cytoplasm. The sequence is that of Large ribosomal subunit protein eL18 (RPL18) from Taenia asiatica (Asian tapeworm).